Reading from the N-terminus, the 778-residue chain is MTISRQFTGLTLAGLFLGLSLSAQAFSPSVQTGADIRRTGFGVPHIRAENERGLGFGIGYAYAQDNLCLLANEIVTVNGERSRYFGPEQLTVEERENRISDVFFQWLNTPQAVNAFWQAQPAEVRDLVEGYAAGYNRYLAERRQQGLPQQCQGEWVRDIAAEDLVKLTRRLLVEGGVGQFAEALASATPPQAMANIENNARAYQLADTRLQRFALDRGSNAVAVGSERSFNGRGMLLANPHFPWVGGMRFYQMHLTIPGKLDVMGAALPGLPMINIGFNQHLAWTHTVDSSKHFTLYRLQLDPKDPTRYLLDGQSLPLSKQTVTVQVKQTDGQVVPVSRDVYSSQFGPIVQWPGKLDWNNQFAYSLRDANLDNDRVLKQWYAMNRAGNLKDLQDSVHTIQGIPWVNTLAVDDKGQTLYMNLSVVPNVSTDKLARCSDPRAGLKMIVLDGSNSACAWDIDPHAAQKGIYASSQLPQLLRKDFVQHSNDSAWLANPAQPLTGFSPLISQDGQPLGLRSRFALDRLATLSKKGLVSVQDLQHMVMDDQVFLATQVVPDLLKFCTSQSEAALKSVCSSLKAWDGRANLESGVGLVHFQSIMQAMQESPQAWRVAFDPKDAQHTPRGLAIEKPEVAKALREAMLASAEIAAKMGLTEKTRWGDVQVVSSGGQQTPIHGGPGTLGIYNAIQSVPREDGKLEVVSGTSYLQVVTFDDKGPHAQGLLAFSLSSDPASKYSRDQTEAFSKKQWSVLPFTEQQIKADPQYQVQTVRDDLEKTGKVAAQ.

The first 25 residues, 1–25, serve as a signal peptide directing secretion; the sequence is MTISRQFTGLTLAGLFLGLSLSAQA. Positions 196–218 are cleaved as a propeptide — spacer peptide; that stretch reads IENNARAYQLADTRLQRFALDRG. Catalysis depends on Ser219, which acts as the Nucleophile.

It belongs to the peptidase S45 family. In terms of assembly, heterodimer of an alpha subunit and a beta subunit processed from the same precursor.

The protein resides in the periplasm. The catalysed reaction is an N-acyl-L-homoserine lactone + H2O = L-homoserine lactone + a carboxylate. In terms of biological role, catalyzes the deacylation of acyl-homoserine lactone (AHL or acyl-HSL), releasing homoserine lactone (HSL) and the corresponding fatty acid. Possesses a specificity for the degradation of long-chain acyl-HSLs (side chains of 11 to 14 carbons in length). The sequence is that of Acyl-homoserine lactone acylase PvdQ (pvdQ) from Pseudomonas fluorescens (strain Pf0-1).